Here is a 571-residue protein sequence, read N- to C-terminus: RNA polymerase sigma factor SigA (571 aa).

The interval 321–391 (MVESNLRLVI…TRAIADQART (71 aa)) is sigma-70 factor domain-2. Positions 345–348 (DLIQ) match the Interaction with polymerase core subunit RpoC motif. The sigma-70 factor domain-3 stretch occupies residues 400–476 (ETINKVLRGA…DTAVESPAEA (77 aa)). The segment at 489-542 (VLKTLTDRERFVLIHRFGLLDGRPKTLEEVGSAFNVTRERIRQIEAKALRKMRH) is sigma-70 factor domain-4. The H-T-H motif DNA-binding region spans 515–534 (LEEVGSAFNVTRERIRQIEA).

Belongs to the sigma-70 factor family. RpoD/SigA subfamily. As to quaternary structure, interacts transiently with the RNA polymerase catalytic core.

The protein resides in the cytoplasm. Its function is as follows. Sigma factors are initiation factors that promote the attachment of RNA polymerase to specific initiation sites and are then released. This sigma factor is the primary sigma factor during exponential growth. The sequence is that of RNA polymerase sigma factor SigA from Chlamydia trachomatis serovar D (strain ATCC VR-885 / DSM 19411 / UW-3/Cx).